Here is a 291-residue protein sequence, read N- to C-terminus: Beta-lactamase Toho-1 (291 aa).

The signal sequence occupies residues 1-29 (MMTQSIRRSMLTVMATLPLLFSSATLHAQ). Residue Ser-73 is the Acyl-ester intermediate of the active site. 237 to 239 (KTG) is a binding site for substrate.

Belongs to the class-A beta-lactamase family. In terms of assembly, monomer.

The enzyme catalyses a beta-lactam + H2O = a substituted beta-amino acid. Functionally, has strong cefotaxime-hydrolyzing activity. The polypeptide is Beta-lactamase Toho-1 (bla) (Escherichia coli).